Here is a 295-residue protein sequence, read N- to C-terminus: (R)-3-hydroxydecanoyl-ACP:CoA transacylase (295 aa).

In terms of domain architecture, AB hydrolase-1 spans 28–254; the sequence is NTIILINGSL…VIRDAGHFLD (227 aa).

The protein operates within polyester biosynthesis; polyhydroxyalkanoate biosynthesis. Catalyzes the transfer of the acyl moiety from in vitro synthesized 3-hydroxydecanoyl-CoA to acyl carrier protein. The protein is (R)-3-hydroxydecanoyl-ACP:CoA transacylase (phaG) of Ectopseudomonas oleovorans (Pseudomonas oleovorans).